We begin with the raw amino-acid sequence, 166 residues long: MEFAFYFAAGVAVLATLRVITNSNPVHALLYLIISLLAISMTFFSLGAPFAGALEIIVYAGAIMVLFVFVVMMLNLGPAVVEQERKWLTPGIWVGPSALALVLLVELLVVLARTPSGAGIGHTTVDAKAVGISLYGPYLLVVELASMLLLAALVAAYHLGRQDAKQ.

The next 5 membrane-spanning stretches (helical) occupy residues 1 to 21 (MEFA…RVIT), 28 to 48 (ALLY…SLGA), 54 to 74 (LEII…VMML), 92 to 112 (IWVG…VVLA), and 134 to 154 (LYGP…AALV).

The protein belongs to the complex I subunit 6 family. As to quaternary structure, composed of 13 different subunits. Subunits NuoA, H, J, K, L, M, N constitute the membrane sector of the complex.

The protein resides in the cell inner membrane. It catalyses the reaction a quinone + NADH + 5 H(+)(in) = a quinol + NAD(+) + 4 H(+)(out). In terms of biological role, NDH-1 shuttles electrons from NADH, via FMN and iron-sulfur (Fe-S) centers, to quinones in the respiratory chain. The immediate electron acceptor for the enzyme in this species is believed to be ubiquinone. Couples the redox reaction to proton translocation (for every two electrons transferred, four hydrogen ions are translocated across the cytoplasmic membrane), and thus conserves the redox energy in a proton gradient. The chain is NADH-quinone oxidoreductase subunit J (nuoJ) from Pseudomonas aeruginosa (strain ATCC 15692 / DSM 22644 / CIP 104116 / JCM 14847 / LMG 12228 / 1C / PRS 101 / PAO1).